The following is a 137-amino-acid chain: uncharacterized protein (137 aa).

The signal sequence occupies residues 1 to 15 (MKKLAIAGALLLLAG). Residue Cys16 is the site of N-palmitoyl cysteine attachment. The S-diacylglycerol cysteine moiety is linked to residue Cys16.

It localises to the cell membrane. This is an uncharacterized protein from Escherichia coli (strain K12).